The following is a 530-amino-acid chain: Nectin-2 (530 aa).

Residues 1–31 (MARAAVLPPSRLSPTLPLLPLLLLLLQETGA) form the signal peptide. The Ig-like V-type domain occupies 32–147 (QDVRVRVLPE…NGTRRGVTWL (116 aa)). The Extracellular segment spans residues 32–351 (QDVRVRVLPE…STAGAGATGG (320 aa)). A disulfide bridge links cysteine 54 with cysteine 131. N-linked (GlcNAc...) asparagine glycosylation is found at asparagine 128 and asparagine 138. Ig-like C2-type domains lie at 153–247 (PENH…VTLS) and 252–337 (PEVS…VILV). Cystine bridges form between cysteine 174–cysteine 229 and cysteine 274–cysteine 320. The N-linked (GlcNAc...) asparagine glycan is linked to asparagine 315. A helical transmembrane segment spans residues 352–372 (IIGGIIAAIIATAVAGTGILI). Residues 373–530 (CRQQRKEQRL…DFFVSRAMYV (158 aa)) lie on the Cytoplasmic side of the membrane. Positions 382–407 (LQAADEEEELEGPPSYKPPTPKAKLE) are disordered. Threonine 401 is subject to Phosphothreonine. Serine 424 is modified (phosphoserine).

Belongs to the nectin family. In terms of assembly, can form trans-heterodimers with NECTIN3. Interacts with CD226 or with PVRIG; these interactions are competitive and have a differential functional outcome on T-cell activation, either positive or negative, respectively. Binds with low affinity to TIGIT. As to expression, brain, spinal cord, spleen, kidney, heart and liver.

It localises to the cell membrane. Modulator of T-cell signaling. Can be either a costimulator of T-cell function, or a coinhibitor, depending on the receptor it binds to. Upon binding to CD226, stimulates T-cell proliferation and cytokine production, including that of IL2, IL5, IL10, IL13, and IFNG. Upon interaction with PVRIG, inhibits T-cell proliferation. These interactions are competitive. Probable cell adhesion protein. The sequence is that of Nectin-2 from Mus musculus (Mouse).